The primary structure comprises 463 residues: Asparagine--tRNA ligase (463 aa).

Belongs to the class-II aminoacyl-tRNA synthetase family. Homodimer.

The protein localises to the cytoplasm. The catalysed reaction is tRNA(Asn) + L-asparagine + ATP = L-asparaginyl-tRNA(Asn) + AMP + diphosphate + H(+). The sequence is that of Asparagine--tRNA ligase from Clostridium kluyveri (strain ATCC 8527 / DSM 555 / NBRC 12016 / NCIMB 10680 / K1).